Reading from the N-terminus, the 458-residue chain is Bifunctional protein GlmU (458 aa).

Positions 1–230 (MLQVDVVILA…DWEVSGVNDK (230 aa)) are pyrophosphorylase. UDP-N-acetyl-alpha-D-glucosamine-binding positions include 9 to 12 (LAAG), Lys23, Gln75, and 80 to 81 (GT). Residue Asp104 coordinates Mg(2+). Residues Gly139, Glu155, Asn170, and Asn228 each contribute to the UDP-N-acetyl-alpha-D-glucosamine site. Asn228 contacts Mg(2+). The linker stretch occupies residues 231–251 (IQLSILERAHQQDTANRLMEQ). Positions 252–458 (GVMFADPARF…NWKRPRKDRN (207 aa)) are N-acetyltransferase. UDP-N-acetyl-alpha-D-glucosamine is bound by residues Arg334 and Lys352. Catalysis depends on His364, which acts as the Proton acceptor. UDP-N-acetyl-alpha-D-glucosamine-binding residues include Tyr367 and Asn378. Residues Ala381, 387-388 (NY), Ser406, Ala424, and Arg441 contribute to the acetyl-CoA site.

This sequence in the N-terminal section; belongs to the N-acetylglucosamine-1-phosphate uridyltransferase family. In the C-terminal section; belongs to the transferase hexapeptide repeat family. In terms of assembly, homotrimer. Mg(2+) serves as cofactor.

It is found in the cytoplasm. The catalysed reaction is alpha-D-glucosamine 1-phosphate + acetyl-CoA = N-acetyl-alpha-D-glucosamine 1-phosphate + CoA + H(+). It carries out the reaction N-acetyl-alpha-D-glucosamine 1-phosphate + UTP + H(+) = UDP-N-acetyl-alpha-D-glucosamine + diphosphate. It functions in the pathway nucleotide-sugar biosynthesis; UDP-N-acetyl-alpha-D-glucosamine biosynthesis; N-acetyl-alpha-D-glucosamine 1-phosphate from alpha-D-glucosamine 6-phosphate (route II): step 2/2. Its pathway is nucleotide-sugar biosynthesis; UDP-N-acetyl-alpha-D-glucosamine biosynthesis; UDP-N-acetyl-alpha-D-glucosamine from N-acetyl-alpha-D-glucosamine 1-phosphate: step 1/1. The protein operates within bacterial outer membrane biogenesis; LPS lipid A biosynthesis. In terms of biological role, catalyzes the last two sequential reactions in the de novo biosynthetic pathway for UDP-N-acetylglucosamine (UDP-GlcNAc). The C-terminal domain catalyzes the transfer of acetyl group from acetyl coenzyme A to glucosamine-1-phosphate (GlcN-1-P) to produce N-acetylglucosamine-1-phosphate (GlcNAc-1-P), which is converted into UDP-GlcNAc by the transfer of uridine 5-monophosphate (from uridine 5-triphosphate), a reaction catalyzed by the N-terminal domain. This Nitrosomonas europaea (strain ATCC 19718 / CIP 103999 / KCTC 2705 / NBRC 14298) protein is Bifunctional protein GlmU.